The primary structure comprises 154 residues: Ribonuclease 8 (154 aa).

A signal peptide spans 1 to 27 (MAPARAGCCPLLLLLLGLRVAQIPVSA). Histidine 42 (proton acceptor) is an active-site residue. Intrachain disulfides connect cysteine 64–cysteine 118, cysteine 82–cysteine 133, and cysteine 89–cysteine 96. Residues 65–69 (KDLNT) and lysine 90 contribute to the substrate site. The active-site Proton donor is the histidine 149.

It belongs to the pancreatic ribonuclease family.

The protein localises to the secreted. Functionally, has a low ribonuclease activity. This is Ribonuclease 8 (RNASE8) from Miopithecus talapoin (Angolan talapoin).